The primary structure comprises 31 residues: Photosystem II reaction center protein T (31 aa).

The chain crosses the membrane as a helical span at residues 3–23 (ALVYTFLLVGTLGIIFFAIFF).

It belongs to the PsbT family. In terms of assembly, PSII is composed of 1 copy each of membrane proteins PsbA, PsbB, PsbC, PsbD, PsbE, PsbF, PsbH, PsbI, PsbJ, PsbK, PsbL, PsbM, PsbT, PsbY, PsbZ, Psb30/Ycf12, at least 3 peripheral proteins of the oxygen-evolving complex and a large number of cofactors. It forms dimeric complexes.

The protein localises to the plastid. The protein resides in the chloroplast thylakoid membrane. Its function is as follows. Found at the monomer-monomer interface of the photosystem II (PS II) dimer, plays a role in assembly and dimerization of PSII. PSII is a light-driven water plastoquinone oxidoreductase, using light energy to abstract electrons from H(2)O, generating a proton gradient subsequently used for ATP formation. The protein is Photosystem II reaction center protein T of Chlorella vulgaris (Green alga).